A 200-amino-acid chain; its full sequence is MADQGLEGSQPVDLTKHPSGIVPTLQNIVSTVNLDCKLDLKAIALQARNAEYNPKRFAAVIMRIREPKTTALIFASGKMVCTGAKSEQQSKLAARKYARIIQKLGFPAKFKDFKIQNIVGSCDVKFPIRLEGLAYAHGAFSSYEPELFPGLIYRMKQPKIVLLIFVSGKIVITGAKVRDETYTAFENIYPVLTEFRKNQQ.

Tandem repeats lie at residues 25–101 (LQNI…ARII) and 115–192 (IQNI…YPVL).

The protein belongs to the TBP family. Belongs to the TFIID complex together with the TBP-associated factors (TAFs). Binds DNA as monomer.

It is found in the nucleus. Functionally, general transcription factor that functions at the core of the DNA-binding multiprotein factor TFIID. Binding of TFIID to the TATA box is the initial transcriptional step of the pre-initiation complex (PIC), playing a role in the activation of eukaryotic genes transcribed by RNA polymerase II. The sequence is that of TATA-box-binding protein (TBP) from Solanum tuberosum (Potato).